A 310-amino-acid chain; its full sequence is uncharacterized protein (310 aa).

One can recognise an HTH lysR-type domain in the interval 5–62 (FTEENLLAFTTAARFGSFSKAAEELGLTTSAISYTIKRMETGLDVVLFTRSTRSIELT). The segment at residues 22–42 (FSKAAEELGLTTSAISYTIKR) is a DNA-binding region (H-T-H motif).

Belongs to the LysR transcriptional regulatory family.

This is an uncharacterized protein from Escherichia coli (strain K12).